Here is a 313-residue protein sequence, read N- to C-terminus: Protein OPG185 (313 aa).

Residues 1–16 (MTRLSILLLLISLVYS) form the signal peptide. Residues 17–277 (TPYPQTQISK…GKYSTKDYVK (261 aa)) are Virion surface-facing. In terms of domain architecture, Ig-like V-type spans 18–121 (PYPQTQISKK…TTNDTDKVDY (104 aa)). An intrachain disulfide couples C36 to C105. N-linked (GlcNAc...) asparagine; by host glycans are attached at residues N71, N114, N163, N182, and N262. A helical membrane pass occupies residues 278–301 (VFGIAALIILSAVAIFCITYYICN). Topologically, residues 302–313 (KRSRKYKTENKV) are intravirion.

This sequence belongs to the orthopoxvirus OPG185 family. In terms of assembly, heterodimerizes with OPG040. The heterodimer OPG185-OPG040 interacts with components of the entry fusion complex OPG143 and OPG094. Heterodimer with C3/VPC protein; disulfide-linked. In terms of processing, glycosylated; contains phosphate and sulfate-substituted glycans. O-glycosylation is required for hemagglutination and hemadsorption activities of infected cell membranes.

Its subcellular location is the virion membrane. The protein localises to the host membrane. Prevents cell to cell fusion by interacting with and directing the viral OPG040 protein on the host plasma membrane. The OPG185-OPG040 complex associates with components of the entry fusion complex (EFC) presumably to avoid superinfection and syncytium formation. Via its interaction with C3/VCP protein, protects the infected cell and probably also the extracellular enveloped virus from complement attack. The protein is Protein OPG185 (OPG185) of Homo sapiens (Human).